Here is a 210-residue protein sequence, read N- to C-terminus: Replication protein RepB (210 aa).

The protein belongs to the Gram-positive plasmids replication protein type 2 family.

Its function is as follows. Is essential for plasmid replication. Nicks the positive strand at the plus origin of replication. The protein is Replication protein RepB (repB) of Streptococcus agalactiae.